A 232-amino-acid chain; its full sequence is 2,3,4,5-tetrahydropyridine-2,6-dicarboxylate N-acetyltransferase (232 aa).

It belongs to the transferase hexapeptide repeat family. DapH subfamily.

It catalyses the reaction (S)-2,3,4,5-tetrahydrodipicolinate + acetyl-CoA + H2O = L-2-acetamido-6-oxoheptanedioate + CoA. Its pathway is amino-acid biosynthesis; L-lysine biosynthesis via DAP pathway; LL-2,6-diaminopimelate from (S)-tetrahydrodipicolinate (acetylase route): step 1/3. In terms of biological role, catalyzes the transfer of an acetyl group from acetyl-CoA to tetrahydrodipicolinate. The protein is 2,3,4,5-tetrahydropyridine-2,6-dicarboxylate N-acetyltransferase of Streptococcus pneumoniae (strain Taiwan19F-14).